Here is a 1057-residue protein sequence, read N- to C-terminus: MTSSVLIQGYEEDDVLKLLQELLDAETSQSCADVGKKIAQLFSNDNPLVTLKTTGFLDGLERAARNKKSGFHREAAMIGFATVIKNLGTPSEVVFLPYLPTILDSFSDRGEVVRQAAKMAAQALLDCLPAGAVETRLIPSLISYLDDSSIKWPSKVAALQLLGSLASSSPKAVADYMAALIPCIKERMHDTKPEISRAAITCMLNLCSVVENNDIIPHIPKLVDCMAHPETLEACIKDLSATTFVATVESVALAVLVPILKRALAQRSQSMLRLTVIITDNLCKLVPDPAEASDFLPELIPDVERIAQTAAMPEVRALASHALTTLNKAAAAQAAKAANNSEKQALDSACKELREAVLKNTSVPHELANSIIDYVCDALAALYKSNNFDKDKWTSQLGVLYLSPLVGEELASQISSKIYDDLHAFYKSLNSVDGISNLTIEEEELVNTDFSLAYGGRLLLSHTNLHLYRGHRYGVVGHNGCGKSTLLRAIGDYKVENFPSPDEVKTCFVAHSLQGEDTSMAILDFVAQDKALLTMNVTRQEAADALHSVGFTAEMQENPVASLSGGWKMKLELARAMLQKADILLLDEPTNHLDVANIAWLEAYLTSQKNITCLIVSHDSSFLDHVCTDIIHYEGVKNQAKKLGYYQGNLSAFVKVKPEAKSYYTLTATNEKFVFPPPGILTGVRSNTRLILKMTNASYTYPNAKKKSLDNVTVGLSLSSRVAILGPNGAGKSTLIKVLIGEVIPQEGKVFKHPNLRVGYVAQHAFHHLDQHLEKTPSQYIQWRYAGGQDREVSEKESRKLTEEDRAQLQRDITVNGERRRVEALIGRQKLKKSFQYEIKWFGKPHKYNTWVSREILLENGFQKFVQAFDDMESSREGLGFRELIPEDIRAHFEDVGLPGDIADYSPISSLSGGQKVKVVIAACLWNNPQLLVLDEPTNFLDRDALGGLAVAIRDWEGGVVMISHNEEFVSALCPEHWHVEAGKVTGKGKTAVDDGKFEDLSEKDLKKIEAKATKKKKLTRNEIKAKERRARERELAWLQSPKGTEKPKSFFSDDEE.

ABC transporter domains are found at residues 440 to 659 (IEEE…VKPE) and 692 to 1019 (LKMT…KKKL). Residues 477-484 (GHNGCGKS) and 726-733 (GPNGAGKS) contribute to the ATP site. Ser-733 bears the Phosphoserine mark. A Chromo domain is found at 820 to 869 (RRVEALIGRQKLKKSFQYEIKWFGKPHKYNTWVSREILLENGFQKFVQAF). Over residues 1020–1036 (TRNEIKAKERRAREREL) the composition is skewed to basic and acidic residues. A disordered region spans residues 1020–1057 (TRNEIKAKERRARERELAWLQSPKGTEKPKSFFSDDEE). 2 positions are modified to phosphoserine: Ser-1041 and Ser-1053.

This sequence belongs to the ABC transporter superfamily. ABCF family. EF3 subfamily.

It is found in the cytoplasm. The protein localises to the nucleus. Its function is as follows. Has a direct role in the mRNA export process. Appears to act within the rae1 mediated mRNA export pathway. This Schizosaccharomyces pombe (strain 972 / ATCC 24843) (Fission yeast) protein is mRNA export factor elf1 (elf1).